Consider the following 70-residue polypeptide: U2-agatoxin-Ao1l (70 aa).

Positions 1–20 (MRAIISLLLISAMVFSIIEA) are cleaved as a signal peptide. A propeptide spanning residues 21–34 (VPEEEGLQLSEDER) is cleaved from the precursor. Cystine bridges form between cysteine 37–cysteine 53, cysteine 44–cysteine 58, and cysteine 52–cysteine 68. The residue at position 69 (leucine 69) is a Leucine amide.

The protein belongs to the neurotoxin 01 (U2-agtx) family. Expressed by the venom gland.

It localises to the secreted. In terms of biological role, insect active toxin causing rapid but reversible paralysis in crickets. No activity shown in mammals. Does not show effect on mammalian voltage-gated calcium channels. This Agelena orientalis (Funnel-web spider) protein is U2-agatoxin-Ao1l.